The sequence spans 173 residues: Dual-action ribosomal maturation protein DarP (173 aa).

It belongs to the DarP family.

The protein localises to the cytoplasm. Functionally, member of a network of 50S ribosomal subunit biogenesis factors which assembles along the 30S-50S interface, preventing incorrect 23S rRNA structures from forming. Promotes peptidyl transferase center (PTC) maturation. The protein is Dual-action ribosomal maturation protein DarP of Pseudomonas putida (strain GB-1).